The sequence spans 547 residues: Chaperonin GroEL (547 aa).

Residues 30 to 33 (TLGP), K51, 87 to 91 (DGTTT), G415, and D495 each bind ATP. The segment at 526–547 (QDATPTASPDMGGMGGMGGGMM) is disordered. Over residues 537–547 (GGMGGMGGGMM) the composition is skewed to gly residues.

This sequence belongs to the chaperonin (HSP60) family. As to quaternary structure, forms a cylinder of 14 subunits composed of two heptameric rings stacked back-to-back. Interacts with the co-chaperonin GroES.

Its subcellular location is the cytoplasm. It catalyses the reaction ATP + H2O + a folded polypeptide = ADP + phosphate + an unfolded polypeptide.. Together with its co-chaperonin GroES, plays an essential role in assisting protein folding. The GroEL-GroES system forms a nano-cage that allows encapsulation of the non-native substrate proteins and provides a physical environment optimized to promote and accelerate protein folding. The protein is Chaperonin GroEL of Vesicomyosocius okutanii subsp. Calyptogena okutanii (strain HA).